The sequence spans 392 residues: Phosphopentomutase (392 aa).

The Mn(2+) site is built by D10, D282, H287, D323, H324, and H335.

Belongs to the phosphopentomutase family. Requires Mn(2+) as cofactor.

The protein localises to the cytoplasm. The enzyme catalyses 2-deoxy-alpha-D-ribose 1-phosphate = 2-deoxy-D-ribose 5-phosphate. The catalysed reaction is alpha-D-ribose 1-phosphate = D-ribose 5-phosphate. The protein operates within carbohydrate degradation; 2-deoxy-D-ribose 1-phosphate degradation; D-glyceraldehyde 3-phosphate and acetaldehyde from 2-deoxy-alpha-D-ribose 1-phosphate: step 1/2. Functionally, isomerase that catalyzes the conversion of deoxy-ribose 1-phosphate (dRib-1-P) and ribose 1-phosphate (Rib-1-P) to deoxy-ribose 5-phosphate (dRib-5-P) and ribose 5-phosphate (Rib-5-P), respectively. The polypeptide is Phosphopentomutase (Dictyoglomus thermophilum (strain ATCC 35947 / DSM 3960 / H-6-12)).